The sequence spans 587 residues: Pyruvate decarboxylase 3 (587 aa).

Residues D48 and H135 each contribute to the substrate site. The tract at residues 415–496 is thiamine pyrophosphate binding; sequence DSWFNCQKLR…FLINNGGYTI (82 aa). Residues D464, N491, and G493 each coordinate Mg(2+). Position 497 (E497) interacts with substrate.

Belongs to the TPP enzyme family. As to quaternary structure, homotetramer. A metal cation is required as a cofactor. The cofactor is thiamine diphosphate.

The catalysed reaction is a 2-oxocarboxylate + H(+) = an aldehyde + CO2. In Oryza sativa subsp. indica (Rice), this protein is Pyruvate decarboxylase 3 (PDC3).